The following is a 35-amino-acid chain: GACRWFLGGCKSTSDCCEHLSCKMGLDYCAWDGTF.

3 cysteine pairs are disulfide-bonded: Cys-3/Cys-17, Cys-10/Cys-22, and Cys-16/Cys-29. The residue at position 35 (Phe-35) is a Phenylalanine amide.

It belongs to the neurotoxin 10 (Hwtx-1) family. 62 (Vatx) subfamily. Expressed by the venom gland.

It is found in the secreted. Its function is as follows. Selectively activates the mammalian capsaicin receptor TRPV1, a non-selective cation channel expressed by sensory neurons of the pain pathway. Is more potent than VaTx1, but less potent than VaTx3. Interacts with distinct regions of the channel than capsaicin, since it only acts on the extracellular face of the channel, and capsaicin binds to the cytosolic side. Also activates avian TRPV1, which is insensitive to capsaicin. Produce weak inhibition on potassium channels Kv2.1/KCNB1. This Psalmopoeus cambridgei (Trinidad chevron tarantula) protein is Tau-theraphotoxin-Pc1b.